The sequence spans 267 residues: tRNA pseudouridine synthase A (267 aa).

The active-site Nucleophile is the Asp-53. Residue Tyr-114 coordinates substrate.

Belongs to the tRNA pseudouridine synthase TruA family. In terms of assembly, homodimer.

The enzyme catalyses uridine(38/39/40) in tRNA = pseudouridine(38/39/40) in tRNA. Functionally, formation of pseudouridine at positions 38, 39 and 40 in the anticodon stem and loop of transfer RNAs. The polypeptide is tRNA pseudouridine synthase A (Chlamydia trachomatis serovar A (strain ATCC VR-571B / DSM 19440 / HAR-13)).